A 378-amino-acid polypeptide reads, in one-letter code: Sphingosine 1-phosphate receptor 3 (378 aa).

Residues 1–40 (MATALPPRLQPVRGNETLREHYQYVGKLAGRLKEASEGST) lie on the Extracellular side of the membrane. N-linked (GlcNAc...) asparagine glycosylation is present at Asn15. The helical transmembrane segment at 41–65 (LTTVLFLVICSFIVLENLMVLIAIW) threads the bilayer. The Cytoplasmic segment spans residues 66–72 (KNNKFHN). Residues 73-101 (RMYFFIGNLALCDLLAGIAYKVNILMSGK) form a helical membrane-spanning segment. The Extracellular portion of the chain corresponds to 102-115 (KTFSLSPTVWFLRE). The chain crosses the membrane as a helical span at residues 116 to 134 (GSMFVALGASTCSLLAIAI). Topologically, residues 135-153 (ERHLTMIKMRPYDANKRHR) are cytoplasmic. Residues 154 to 179 (VFLLIGMCWLIAFTLGALPILGWNCL) traverse the membrane as a helical segment. The Extracellular portion of the chain corresponds to 180 to 195 (HNLPDCSTILPLYSKK). Residues 196–216 (YIAFCISIFTAILVTIVILYA) form a helical membrane-spanning segment. The Cytoplasmic portion of the chain corresponds to 217 to 243 (RIYFLVKSSSRKVANHNNSERSMALLR). Residues 244–265 (TVVIVVSVFIACWSPLFILFLI) traverse the membrane as a helical segment. Over 266 to 281 (DVACRVQACPILFKAQ) the chain is Extracellular. The chain crosses the membrane as a helical span at residues 282–302 (WFIVLAVLNSAMNPVIYTLAS). The Cytoplasmic segment spans residues 303 to 378 (KEMRRAFFRL…AALQNGIFCN (76 aa)). Residue Ser326 is modified to Phosphoserine. The segment at 327 to 357 (PIQPALDPSRSKSSSSNNSSHSPKVKEDLPH) is disordered. The span at 337–348 (SKSSSSNNSSHS) shows a compositional bias: low complexity.

This sequence belongs to the G-protein coupled receptor 1 family. In terms of tissue distribution, expressed in all tissues, but most abundantly in heart, placenta, kidney, and liver.

It localises to the cell membrane. In terms of biological role, receptor for the lysosphingolipid sphingosine 1-phosphate (S1P). S1P is a bioactive lysophospholipid that elicits diverse physiological effect on most types of cells and tissues. When expressed in rat HTC4 hepatoma cells, is capable of mediating S1P-induced cell proliferation and suppression of apoptosis. This chain is Sphingosine 1-phosphate receptor 3, found in Homo sapiens (Human).